The chain runs to 397 residues: MEIFKKASSIIETLKQQGHEAYFVGGSVRDLIIDRPIGDIDIATSALPEEVMGIFPRHVPVGLEHGTVIVVENGEPYEVTTFRTESEYEDFRRPSSVQFVRSLEEDLKRRDFTMNAIAMTEEGEMVDLFAGQEAIQKREIVTVGNAADRFQEDALRMMRGIRFVSTLGFSLETKTKQAIETYGHLLEHIAIERITVEFEKLLTGTYCVKGLKELVETKLFSHLPYLQMSEERLLKATQYNWDSFETDIEAWAFFLYCIGEEHPSVFLRQWKFSNKKIKDIVAVLLTIRKRKEKDWDTVLLYKTGIHIAEMSERVYEAMIESYDNTSVKRVQTLFEALPIKSRQEMNVTGNDLLNWANKKPGPWVAEMIQNIEEAIVQGNVVNEKECIREWLQECNLL.

2 residues coordinate ATP: glycine 26 and arginine 29. CTP is bound by residues glycine 26 and arginine 29. 2 residues coordinate Mg(2+): aspartate 39 and aspartate 41. The ATP site is built by arginine 110, aspartate 153, arginine 156, arginine 159, and arginine 162. CTP-binding residues include arginine 110, aspartate 153, arginine 156, arginine 159, and arginine 162.

This sequence belongs to the tRNA nucleotidyltransferase/poly(A) polymerase family. Bacterial CCA-adding enzyme type 3 subfamily. As to quaternary structure, homodimer. Mg(2+) is required as a cofactor.

The catalysed reaction is a tRNA precursor + 2 CTP + ATP = a tRNA with a 3' CCA end + 3 diphosphate. The enzyme catalyses a tRNA with a 3' CCA end + 2 CTP + ATP = a tRNA with a 3' CCACCA end + 3 diphosphate. Its function is as follows. Catalyzes the addition and repair of the essential 3'-terminal CCA sequence in tRNAs without using a nucleic acid template. Adds these three nucleotides in the order of C, C, and A to the tRNA nucleotide-73, using CTP and ATP as substrates and producing inorganic pyrophosphate. tRNA 3'-terminal CCA addition is required both for tRNA processing and repair. Also involved in tRNA surveillance by mediating tandem CCA addition to generate a CCACCA at the 3' terminus of unstable tRNAs. While stable tRNAs receive only 3'-terminal CCA, unstable tRNAs are marked with CCACCA and rapidly degraded. This is CCA-adding enzyme from Bacillus cereus (strain 03BB102).